A 183-amino-acid polypeptide reads, in one-letter code: Endoribonuclease YbeY (183 aa).

Zn(2+) is bound by residues His-140, His-144, and His-150.

The protein belongs to the endoribonuclease YbeY family. Requires Zn(2+) as cofactor.

The protein localises to the cytoplasm. Functionally, single strand-specific metallo-endoribonuclease involved in late-stage 70S ribosome quality control and in maturation of the 3' terminus of the 16S rRNA. The protein is Endoribonuclease YbeY of Bradyrhizobium diazoefficiens (strain JCM 10833 / BCRC 13528 / IAM 13628 / NBRC 14792 / USDA 110).